An 88-amino-acid polypeptide reads, in one-letter code: N-alpha-acetyltransferase 38, NatC auxiliary subunit (88 aa).

One can recognise a Sm domain in the interval 1 to 72 (MDILKLSDFI…VKTIMIDKPV (72 aa)).

As to quaternary structure, component of the N-terminal acetyltransferase C (NatC) complex, composed of the catalytic subunit Naa30/MAK3, a large auxiliary subunit Naa35/MAK10 and a small auxiliary subunit Naa38/MAK31.

Its function is as follows. Component of the NatC N-terminal acetyltransferase, which associates with the ribosome to acetylate nascent protein chains in a cotranslational manner. NatC acetylates protein N-termini starting with methionine, followed by a hydrophobic or amphipathic amino acid, with amino acids at positions 3 and 4 also contributing to NatC recognition. The first 4 amino acids of cognate substrates are recognized at the Naa30/MAK3-Naa35/MAK10 interface. NatC-dependent acetylation targets various substrate proteins to specific subcellular sites, including isoform 2 of tRNA-specific methyltransferase Trm1 to the inner nuclear membrane. Catalyzes the acetylation of the N-terminal Met of ARF-like GTPase ARL3, which is required for its Golgi localization via interaction with the Golgi-localized integral membrane protein SYS1, which may serve as a receptor for acetylated ARL3. Catalyzes the acetylation of the N-terminal Met of L-A virus Gag protein. MAK31 is necessary for the structural stability of L-A double-stranded RNA-containing particles. Necessary for growth at 37 degrees Celsius as well as for maintenance of the killer plasmid. The protein is N-alpha-acetyltransferase 38, NatC auxiliary subunit (MAK31) of Saccharomyces cerevisiae (strain ATCC 204508 / S288c) (Baker's yeast).